We begin with the raw amino-acid sequence, 213 residues long: Adenylate kinase (213 aa).

An ATP-binding site is contributed by 10–15 (GAGKGT). Residues 30-59 (STGDMFRAAMANQTEMGILAKSYIDKGDLV) form an NMP region. Residues threonine 31, arginine 36, 57–59 (DLV), 86–89 (GYPR), and glutamine 93 contribute to the AMP site. The tract at residues 127 to 160 (GRIIHKETGETFHKVFNPPVGDYKEEDFYQREDD) is LID. ATP-binding positions include arginine 128 and 137 to 138 (TF). AMP is bound by residues arginine 157 and arginine 168. Glutamine 196 is a binding site for ATP.

Belongs to the adenylate kinase family. As to quaternary structure, monomer.

The protein localises to the cytoplasm. The enzyme catalyses AMP + ATP = 2 ADP. The protein operates within purine metabolism; AMP biosynthesis via salvage pathway; AMP from ADP: step 1/1. Catalyzes the reversible transfer of the terminal phosphate group between ATP and AMP. Plays an important role in cellular energy homeostasis and in adenine nucleotide metabolism. In Streptococcus suis (strain 98HAH33), this protein is Adenylate kinase.